Consider the following 289-residue polypeptide: Pantothenate synthetase (289 aa).

Residue 30–37 participates in ATP binding; that stretch reads MGYLHKGH. Residue H37 is the Proton donor of the active site. Residue Q61 participates in (R)-pantoate binding. Q61 is a beta-alanine binding site. Position 147-150 (147-150) interacts with ATP; it reads GEKD. Q153 serves as a coordination point for (R)-pantoate. ATP-binding positions include V176 and 184 to 187; that span reads CSSR.

The protein belongs to the pantothenate synthetase family. Homodimer.

It is found in the cytoplasm. It catalyses the reaction (R)-pantoate + beta-alanine + ATP = (R)-pantothenate + AMP + diphosphate + H(+). The protein operates within cofactor biosynthesis; (R)-pantothenate biosynthesis; (R)-pantothenate from (R)-pantoate and beta-alanine: step 1/1. Its function is as follows. Catalyzes the condensation of pantoate with beta-alanine in an ATP-dependent reaction via a pantoyl-adenylate intermediate. This Brucella anthropi (strain ATCC 49188 / DSM 6882 / CCUG 24695 / JCM 21032 / LMG 3331 / NBRC 15819 / NCTC 12168 / Alc 37) (Ochrobactrum anthropi) protein is Pantothenate synthetase.